The sequence spans 274 residues: 2,3,4,5-tetrahydropyridine-2,6-dicarboxylate N-succinyltransferase (274 aa).

The substrate site is built by arginine 107 and aspartate 144.

The protein belongs to the transferase hexapeptide repeat family. As to quaternary structure, homotrimer.

The protein resides in the cytoplasm. The catalysed reaction is (S)-2,3,4,5-tetrahydrodipicolinate + succinyl-CoA + H2O = (S)-2-succinylamino-6-oxoheptanedioate + CoA. Its pathway is amino-acid biosynthesis; L-lysine biosynthesis via DAP pathway; LL-2,6-diaminopimelate from (S)-tetrahydrodipicolinate (succinylase route): step 1/3. The protein is 2,3,4,5-tetrahydropyridine-2,6-dicarboxylate N-succinyltransferase of Cereibacter sphaeroides (strain ATCC 17029 / ATH 2.4.9) (Rhodobacter sphaeroides).